Here is a 213-residue protein sequence, read N- to C-terminus: Elongation factor 1-beta (213 aa).

Residues 67–80 show a composition bias toward low complexity; that stretch reads AGKAPAASGSAAAA. Positions 67–88 are disordered; sequence AGKAPAASGSAAAAAEEEDDED.

Belongs to the EF-1-beta/EF-1-delta family. In terms of assembly, EF-1 is composed of 4 subunits: alpha, beta, delta, and gamma.

Functionally, EF-1-beta and EF-1-delta stimulate the exchange of GDP bound to EF-1-alpha to GTP. The polypeptide is Elongation factor 1-beta (EFB1) (Candida albicans (strain WO-1) (Yeast)).